We begin with the raw amino-acid sequence, 124 residues long: Nascent polypeptide-associated complex protein (124 aa).

The NAC-A/B domain occupies 7–74 (GLNPRKMKQM…PESRERGDSG (68 aa)). The tract at residues 53 to 124 (AQGQQTYQVV…DLAAAVQKLE (72 aa)) is disordered. A compositionally biased stretch (acidic residues) spans 74 to 93 (GSEDDSETESGGEFSEDDVE).

This sequence belongs to the NAC-alpha family. In terms of assembly, homodimer. Interacts with the ribosome. Binds ribosomal RNA.

In terms of biological role, contacts the emerging nascent chain on the ribosome. The protein is Nascent polypeptide-associated complex protein of Natronomonas pharaonis (strain ATCC 35678 / DSM 2160 / CIP 103997 / JCM 8858 / NBRC 14720 / NCIMB 2260 / Gabara) (Halobacterium pharaonis).